We begin with the raw amino-acid sequence, 500 residues long: Tyrosine decarboxylase 2 (500 aa).

Tandem repeats lie at residues 65 to 122 and 125 to 176. The segment at 65–176 is 2 X approximate tandem repeats; the sequence is EDIRQKIVPG…KFLNRFGKRS (112 aa). S89 lines the substrate pocket. Positions 153 and 154 each coordinate pyridoxal 5'-phosphate. Residue H189 coordinates substrate. T248 and N302 together coordinate pyridoxal 5'-phosphate. Position 305 is an N6-(pyridoxal phosphate)lysine (K305).

It belongs to the group II decarboxylase family. It depends on pyridoxal 5'-phosphate as a cofactor. In terms of tissue distribution, mostly expressed in bulbs, and, to a lower extent, in stems, roots, leaves and flowers.

The catalysed reaction is L-tyrosine + H(+) = tyramine + CO2. Its pathway is alkaloid biosynthesis. Functionally, catalyzes the decarboxylation of L-tyrosine to tyramine, which is converted to norbelladine, a precursor to all Amaryllidaceae alkaloids such as galanthamine, lycorine and haemanthamine, and including haemanthamine- and crinamine-type alkaloids, promising anticancer agents. The protein is Tyrosine decarboxylase 2 of Narcissus pseudonarcissus (Daffodil).